Reading from the N-terminus, the 108-residue chain is uncharacterized protein (108 aa).

The segment covering Met1–Ser12 has biased composition (polar residues). The segment at Met1–Gln22 is disordered.

This is an uncharacterized protein from Dictyostelium discoideum (Social amoeba).